A 541-amino-acid polypeptide reads, in one-letter code: MIVSIVDYGSGNVRSLINAVRYLGFETQWIRNPHDIEKAECLIFPGVGNFGFVCDSLAKQGFLEPLRRYALSGKPFMAVCVGIQALFEGSVEAPHSKGLGVFPGLVQRFDNDDKTVPHIGWNSCAVRSDTSKEFFGMRPHDKFYFVHSYMIPEKGLILPPEFKIATTKYGNETFVGAIVKNNFLATQFHPEKSGSAGLRCLKAFLTGNYEQPISGEASKLIENSFGGLTKRIIACLDVRSNDAGDLVVTKGDQYDVREKSSGSEVRNLGKPVELCQRYFQEGADEVVFLNITSFRNCPMADAPMLQVLEKAAQTVFVPLTVGGGIRDVSDPDGTFHPAVEVAGIYFRSGADKVSIGSDAVYAAEKYYENGKKLSGKTAIETISKAYGNQAVVISVDPKRQYVKVPEDTKHHVVKTSRLGPNGEAYCWYQCTVKGGREYRDIDVVELTRACEAMGAGEVLLNCMDQDGSNAGYDIELVRLVKNSVNIPVIASSGAGIPQHFEEVFKETDCDAALAAGIFHRQTCRIEDVKEYLAIHDVLVRT.

In terms of domain architecture, Glutamine amidotransferase type-1 spans 2–214 (IVSIVDYGSG…LTGNYEQPIS (213 aa)). Catalysis depends on for GATase activity residues Cys-80, His-189, and Glu-191. The interval 228–541 (LTKRIIACLD…LAIHDVLVRT (314 aa)) is cyclase. Catalysis depends on residues Asp-237 and Asp-396.

The protein in the C-terminal section; belongs to the HisA/HisF family.

The enzyme catalyses 5-[(5-phospho-1-deoxy-D-ribulos-1-ylimino)methylamino]-1-(5-phospho-beta-D-ribosyl)imidazole-4-carboxamide + L-glutamine = D-erythro-1-(imidazol-4-yl)glycerol 3-phosphate + 5-amino-1-(5-phospho-beta-D-ribosyl)imidazole-4-carboxamide + L-glutamate + H(+). It carries out the reaction L-glutamine + H2O = L-glutamate + NH4(+). The protein operates within amino-acid biosynthesis; L-histidine biosynthesis; L-histidine from 5-phospho-alpha-D-ribose 1-diphosphate: step 5/9. IGPS catalyzes the conversion of PRFAR and glutamine to IGP, AICAR and glutamate. The glutaminase domain produces the ammonia necessary for the cyclase domain to produce IGP and AICAR from PRFAR. The ammonia is channeled to the active site of the cyclase domain. The protein is Imidazole glycerol phosphate synthase hisHF (his4) of Schizosaccharomyces pombe (strain 972 / ATCC 24843) (Fission yeast).